Here is a 569-residue protein sequence, read N- to C-terminus: Zinc finger and BTB domain-containing protein 7A (569 aa).

In terms of domain architecture, BTB spans 34–101; it reads CDVVILVEGR…AYTATLTVST (68 aa). The disordered stretch occupies residues 214 to 304; the sequence is YGPGPPADRP…LSGAAEGEDG (91 aa). The mediates interaction with KHDRBS1 stretch occupies residues 275 to 569; the sequence is EEEAAALSEA…VATAEGNFAT (295 aa). Low complexity predominate over residues 279–288; it reads AALSEAAPEP. Phosphoserine occurs at positions 331 and 335. The mediates interaction with RELA stretch occupies residues 343-569; it reads MDYYLKYFSG…VATAEGNFAT (227 aa). Positions 371–569 are mediates interaction with SMAD4; the sequence is RAKAFQKCPI…VATAEGNFAT (199 aa). C2H2-type zinc fingers lie at residues 376-398 and 404-426; these read QKCP…IRTH and YECN…MRKH. K430 participates in a covalent cross-link: Glycyl lysine isopeptide (Lys-Gly) (interchain with G-Cter in SUMO2). A C2H2-type 3 zinc finger spans residues 432–454; that stretch reads YLCQQCGAAFAHNYDLKNHMRVH. A C2H2-type 4; atypical zinc finger spans residues 460 to 484; it reads YQCDSCCKTFVRSDHLHRHLKKDGC. Residues 480-569 are disordered; that stretch reads KKDGCNGVPS…VATAEGNFAT (90 aa). Residues 498-519 show a composition bias toward low complexity; it reads RGVPPDVPAGAGAPPGLPDAPR. K527 is covalently cross-linked (Glycyl lysine isopeptide (Lys-Gly) (interchain with G-Cter in SUMO2)). S537 is modified (phosphoserine). A compositionally biased stretch (gly residues) spans 548–557; the sequence is GSGGDDGAGG.

In terms of assembly, homodimer. Interacts with BCL6. Interacts with RELA; involved in the control by RELA of the accessibility of target gene promoters. Interacts with AR (via NR LBD domain); the interaction is direct and androgen-dependent. Interacts with NCOR1. Interacts with NCOR2. Interacts with SMAD4; the interaction is direct and stimulated by TGFB1. Interacts with HDAC1. Interacts with SP1; ZBTB7A prevents the binding to GC-rich motifs in promoters and represses the transcriptional activity of SP1. Interacts with the DNA-dependent protein kinase complex/DNA-PKc. Interacts with KHDRBS1; negatively regulates KHDRBS1 splicing activity. Sumoylated. Undergoes sumoylation with SUMO1 that may regulate its transcriptional activity. In terms of tissue distribution, widely expressed. In normal thymus, expressed in medullary epithelial cells and Hassle's corpuscles (at protein level). In the spleen, mainly expressed in the white pulp germinal centers (at protein level). Up-regulated in thymic lymphomas.

It is found in the nucleus. Transcription factor that represses the transcription of a wide range of genes involved in cell proliferation and differentiation. Directly and specifically binds to the consensus sequence 5'-[GA][CA]GACCCCCCCCC-3' and represses transcription both by regulating the organization of chromatin and through the direct recruitment of transcription factors to gene regulatory regions. Negatively regulates SMAD4 transcriptional activity in the TGF-beta signaling pathway through these two mechanisms. That is, recruits the chromatin regulator HDAC1 to the SMAD4-DNA complex and in parallel prevents the recruitment of the transcriptional activators CREBBP and EP300. Collaborates with transcription factors like RELA to modify the accessibility of gene transcription regulatory regions to secondary transcription factors. Also directly interacts with transcription factors like SP1 to prevent their binding to DNA. Functions as an androgen receptor/AR transcriptional corepressor by recruiting NCOR1 and NCOR2 to the androgen response elements/ARE on target genes. Thereby, negatively regulates androgen receptor signaling and androgen-induced cell proliferation. Involved in the switch between fetal and adult globin expression during erythroid cells maturation. Through its interaction with the NuRD complex regulates chromatin at the fetal globin genes to repress their transcription. Specifically represses the transcription of the tumor suppressor ARF isoform from the CDKN2A gene. Efficiently abrogates E2F1-dependent CDKN2A transactivation. Regulates chondrogenesis through the transcriptional repression of specific genes via a mechanism that also requires histone deacetylation. Regulates cell proliferation through the transcriptional regulation of genes involved in glycolysis. Involved in adipogenesis through the regulation of genes involved in adipocyte differentiation. Plays a key role in the differentiation of lymphoid progenitors into B and T lineages. Promotes differentiation towards the B lineage by inhibiting the T-cell instructive Notch signaling pathway through the specific transcriptional repression of Notch downstream target genes. Also regulates osteoclast differentiation. May also play a role, independently of its transcriptional activity, in double-strand break repair via classical non-homologous end joining/cNHEJ. Recruited to double-strand break sites on damage DNA, interacts with the DNA-dependent protein kinase complex and directly regulates its stability and activity in DNA repair. May also modulate the splicing activity of KHDRBS1 toward BCL2L1 in a mechanism which is histone deacetylase-dependent and thereby negatively regulates the pro-apoptotic effect of KHDRBS1. The chain is Zinc finger and BTB domain-containing protein 7A from Mus musculus (Mouse).